The sequence spans 466 residues: Asparagine--tRNA ligase (466 aa).

Belongs to the class-II aminoacyl-tRNA synthetase family. In terms of assembly, homodimer.

The protein localises to the cytoplasm. It catalyses the reaction tRNA(Asn) + L-asparagine + ATP = L-asparaginyl-tRNA(Asn) + AMP + diphosphate + H(+). This chain is Asparagine--tRNA ligase, found in Shewanella sp. (strain ANA-3).